The sequence spans 207 residues: Guanylate kinase (207 aa).

A Guanylate kinase-like domain is found at 4–184 (GTLYIVSAPS…ALSDLKTIIR (181 aa)). 11-18 (APSGAGKS) is an ATP binding site.

This sequence belongs to the guanylate kinase family.

Its subcellular location is the cytoplasm. The enzyme catalyses GMP + ATP = GDP + ADP. In terms of biological role, essential for recycling GMP and indirectly, cGMP. This Yersinia pestis bv. Antiqua (strain Antiqua) protein is Guanylate kinase.